The sequence spans 450 residues: mRNA cleavage and polyadenylation factor CLP1 (450 aa).

ATP contacts are provided by residues Glu-29, Lys-67, and 137 to 142; that span reads NSGKTS.

It belongs to the Clp1 family. Clp1 subfamily. Component of a pre-mRNA cleavage factor complex. Interacts directly with PCF11.

It localises to the nucleus. Its function is as follows. Required for endonucleolytic cleavage during polyadenylation-dependent pre-mRNA 3'-end formation. This chain is mRNA cleavage and polyadenylation factor CLP1, found in Yarrowia lipolytica (strain CLIB 122 / E 150) (Yeast).